We begin with the raw amino-acid sequence, 828 residues long: Protein ELFN1 (828 aa).

An N-terminal signal peptide occupies residues 1 to 27; the sequence is MAGRGWGALWVCVAAATLLHAGGLARA. Over 28-418 the chain is Extracellular; sequence DCWLIEGDKG…VPSPSTATHY (391 aa). Residue asparagine 59 is glycosylated (N-linked (GlcNAc...) asparagine). 5 LRR repeats span residues 61–82, 85–106, 109–130, 133–154, and 157–178; these read TIVD…SLSR, NLTY…AFSG, NLQV…MLRG, KLEY…SFWE, and NIVN…TFAG. Asparagine 85, asparagine 90, and asparagine 122 each carry an N-linked (GlcNAc...) asparagine glycan. An LRRCT domain is found at 190–252; that stretch reads NPFYCSCELL…LSKLQSVCTE (63 aa). The N-linked (GlcNAc...) asparagine glycan is linked to asparagine 210. Residues 259–291 are disordered; it reads VVGPPRPASGRSQPGRSPPPPPPPEPSDMPCAD. Pro residues predominate over residues 274–285; the sequence is RSPPPPPPPEPS. Residues 312–399 form the Fibronectin type-III domain; it reads QAEARPLIKV…HNHTCLTICL (88 aa). The stretch at 318–342 is one LRR 6 repeat; sequence LIKVKQLTQNSATITVQLPSPFHRM. Residue asparagine 376 is glycosylated (N-linked (GlcNAc...) asparagine). A helical transmembrane segment spans residues 419-439; that stretch reads IMTILGCLFGMVLVLGAVYYC. The Cytoplasmic portion of the chain corresponds to 440–828; that stretch reads LRRRRRQEEK…WKGVSAQHKS (389 aa). Serine 461 carries the phosphoserine modification. Disordered stretches follow at residues 517-552, 624-649, and 696-732; these read TPKA…QSSV, LQRH…VRSP, and KGRQ…GLGR. Residues 529-541 are compositionally biased toward basic and acidic residues; sequence RTGDPPERRDCEL. Over residues 632–649 the composition is skewed to low complexity; the sequence is AAGPPRASTSSSGSVRSP. At serine 645 the chain carries Phosphoserine. The span at 696–705 shows a compositional bias: basic and acidic residues; sequence KGRQYGEHRH. A compositionally biased stretch (pro residues) spans 713–727; that stretch reads AEPPAPPGPPPPPPH.

In terms of assembly, interacts with PPP1CA.

It localises to the membrane. The protein resides in the cell projection. It is found in the dendrite. Its function is as follows. Postsynaptic protein that regulates circuit dynamics in the central nervous system by modulating the temporal dynamics of interneuron recruitment. Specifically present in excitatory synapses onto oriens-lacunosum molecular (OLM) interneurons and acts as a regulator of presynaptic release probability to direct the formation of highly facilitating pyramidal-OLM synapses. Inhibits phosphatase activity of protein phosphatase 1 (PP1) complexes. This chain is Protein ELFN1 (ELFN1), found in Homo sapiens (Human).